Reading from the N-terminus, the 430-residue chain is Protein trichome birefringence-like 24 (430 aa).

Residues 15–35 (VLLIKLISAILISFFAFRLFI) traverse the membrane as a helical; Signal-anchor for type II membrane protein segment. Positions 153–155 (GDS) match the GDS motif motif. The DCXHWCLPGXXDXWN motif signature appears at 406 to 420 (DCLHWCLPGPFDYLN).

Belongs to the PC-esterase family. TBL subfamily.

The protein resides in the membrane. Functionally, may act as a bridging protein that binds pectin and other cell wall polysaccharides. Probably involved in maintaining esterification of pectins. May be involved in the specific O-acetylation of cell wall polymers. The chain is Protein trichome birefringence-like 24 (TBL24) from Arabidopsis thaliana (Mouse-ear cress).